The primary structure comprises 278 residues: Heat stress transcription factor C-2b (278 aa).

Gly residues predominate over residues 105–114 (AAGGGGGGGG). The segment at 105-132 (AAGGGGGGGGGKRRDASADGGGGGGDED) is disordered. The tract at residues 143–179 (LKQEQRTIDDRVAAMWRRVQETERRPKQMLAFLLKVV) is hydrophobic repeat HR-A/B. The short motif at 219-222 (KRAR) is the Nuclear localization signal element.

It belongs to the HSF family. Class C subfamily. As to quaternary structure, homotrimer. Post-translationally, exhibits temperature-dependent phosphorylation.

It localises to the nucleus. In terms of biological role, transcriptional regulator that specifically binds DNA of heat shock promoter elements (HSE). The polypeptide is Heat stress transcription factor C-2b (HSFC2B) (Oryza sativa subsp. japonica (Rice)).